Consider the following 333-residue polypeptide: Adenosine deaminase (333 aa).

2 residues coordinate Zn(2+): H12 and H14. Residues H14, D16, and G170 each coordinate substrate. H197 is a Zn(2+) binding site. Catalysis depends on E200, which acts as the Proton donor. D278 lines the Zn(2+) pocket. Substrate is bound at residue D279.

It belongs to the metallo-dependent hydrolases superfamily. Adenosine and AMP deaminases family. Adenosine deaminase subfamily. Zn(2+) serves as cofactor.

It catalyses the reaction adenosine + H2O + H(+) = inosine + NH4(+). The enzyme catalyses 2'-deoxyadenosine + H2O + H(+) = 2'-deoxyinosine + NH4(+). Its function is as follows. Catalyzes the hydrolytic deamination of adenosine and 2-deoxyadenosine. This Aliivibrio fischeri (strain MJ11) (Vibrio fischeri) protein is Adenosine deaminase.